Reading from the N-terminus, the 290-residue chain is 2-dehydro-3-deoxy-phosphogluconate/2-dehydro-3-deoxy-6-phosphogalactonate aldolase (290 aa).

Residues 42–43 (TT), 129–131 (YNY), and 155–157 (KDT) contribute to the substrate site. Catalysis depends on Lys-155, which acts as the Schiff-base intermediate with substrate.

The protein belongs to the DapA family. KDPG aldolase subfamily. Homotetramer; dimer of dimers.

The catalysed reaction is 2-dehydro-3-deoxy-6-phospho-D-gluconate = D-glyceraldehyde 3-phosphate + pyruvate. The enzyme catalyses 2-dehydro-3-deoxy-6-phospho-D-galactonate = D-glyceraldehyde 3-phosphate + pyruvate. The protein operates within carbohydrate acid metabolism; 2-dehydro-3-deoxy-D-gluconate degradation; D-glyceraldehyde 3-phosphate and pyruvate from 2-dehydro-3-deoxy-D-gluconate: step 2/2. Functionally, involved in the degradation of glucose and galactose via the Entner-Doudoroff pathway. Catalyzes the reversible cleavage of 2-keto-3-deoxy-6-phosphogluconate (KDPG) and 2-keto-3-deoxygluconate (KDG) forming pyruvate and glyceraldehyde 3-phosphate or glyceraldehyde, respectively. It is also able to catalyze the reversible cleavage of 2-keto-3-deoxy-6-phosphogalactonate (KDPGal) and 2-keto-3-deoxygalactonate (KDGal). The protein is 2-dehydro-3-deoxy-phosphogluconate/2-dehydro-3-deoxy-6-phosphogalactonate aldolase (kdgA) of Sulfurisphaera tokodaii (strain DSM 16993 / JCM 10545 / NBRC 100140 / 7) (Sulfolobus tokodaii).